The following is an 81-amino-acid chain: MSHSVKIYDTCIGCTQCVRACPTDVLEMIPWDGCKAKQIASAPRTEDCVGCKRCESACPTDFLSVRVYLWHETTRSMGLAY.

4Fe-4S ferredoxin-type domains follow at residues 2-31 (SHSVKIYDTCIGCTQCVRACPTDVLEMIPW) and 39-68 (IASAPRTEDCVGCKRCESACPTDFLSVRVY). Residues Cys-11, Cys-14, Cys-17, Cys-21, Cys-48, Cys-51, Cys-54, and Cys-58 each contribute to the [4Fe-4S] cluster site.

The eukaryotic PSI reaction center is composed of at least 11 subunits. [4Fe-4S] cluster is required as a cofactor.

The protein localises to the plastid. The protein resides in the chloroplast thylakoid membrane. It catalyses the reaction reduced [plastocyanin] + hnu + oxidized [2Fe-2S]-[ferredoxin] = oxidized [plastocyanin] + reduced [2Fe-2S]-[ferredoxin]. Functionally, apoprotein for the two 4Fe-4S centers FA and FB of photosystem I (PSI); essential for photochemical activity. FB is the terminal electron acceptor of PSI, donating electrons to ferredoxin. The C-terminus interacts with PsaA/B/D and helps assemble the protein into the PSI complex. Required for binding of PsaD and PsaE to PSI. PSI is a plastocyanin-ferredoxin oxidoreductase, converting photonic excitation into a charge separation, which transfers an electron from the donor P700 chlorophyll pair to the spectroscopically characterized acceptors A0, A1, FX, FA and FB in turn. The protein is Photosystem I iron-sulfur center of Vitis vinifera (Grape).